Consider the following 207-residue polypeptide: Macrophage immunometabolism regulator (207 aa).

Methionine 1 is subject to N-acetylmethionine. Residues 1 to 41 (MEVDINGDSRSTLTTLPLPVAEGSSPGKAEAEKPRCSSTPC) form a disordered region. Residues serine 25 and serine 167 each carry the phosphoserine modification.

This sequence belongs to the UNC119-binding protein family. As to quaternary structure, interacts with UNC119 and UNC119B; interaction preferentially takes place when UNC119 and UNC119B are unliganded with myristoylated proteins. Highly expressed in photoreceptors.

It localises to the cytoplasm. The protein localises to the cell projection. The protein resides in the cilium. Its function is as follows. Regulates the macrophage function, by enhancing the resolution of inflammation and wound repair functions mediated by M2 macrophages. The regulation of macrophage function is, due at least in part, to its ability to inhibit glycolysis. May also play a role in trafficking of proteins via its interaction with UNC119 and UNC119B cargo adapters: may help the release of UNC119 and UNC119B cargo or the recycling of UNC119 and UNC119B. May play a role in ciliary membrane localization via its interaction with UNC119B and protein transport into photoreceptor cells. The sequence is that of Macrophage immunometabolism regulator from Mus musculus (Mouse).